Consider the following 295-residue polypeptide: Foldase protein PrsA (295 aa).

An N-terminal signal peptide occupies residues 1-19 (MKKVLIGFASIAMAFTLAA). C20 carries N-palmitoyl cysteine lipidation. C20 carries the S-diacylglycerol cysteine lipid modification. The PpiC domain occupies 136 to 229 (EPKVTVAQIL…YGYQVIKMIN (94 aa)).

The protein belongs to the PrsA family.

It localises to the cell membrane. It catalyses the reaction [protein]-peptidylproline (omega=180) = [protein]-peptidylproline (omega=0). Plays a major role in protein secretion by helping the post-translocational extracellular folding of several secreted proteins. The polypeptide is Foldase protein PrsA (Pediococcus pentosaceus (strain ATCC 25745 / CCUG 21536 / LMG 10740 / 183-1w)).